A 537-amino-acid polypeptide reads, in one-letter code: Chaperonin GroEL (537 aa).

Residues 29-32, 86-90, Gly413, 477-479, and Asp493 contribute to the ATP site; these read TLGP, DGTTT, and NAA.

The protein belongs to the chaperonin (HSP60) family. In terms of assembly, forms a cylinder of 14 subunits composed of two heptameric rings stacked back-to-back. Interacts with the co-chaperonin GroES.

It is found in the cytoplasm. The enzyme catalyses ATP + H2O + a folded polypeptide = ADP + phosphate + an unfolded polypeptide.. Together with its co-chaperonin GroES, plays an essential role in assisting protein folding. The GroEL-GroES system forms a nano-cage that allows encapsulation of the non-native substrate proteins and provides a physical environment optimized to promote and accelerate protein folding. The protein is Chaperonin GroEL of Parascardovia denticolens (Bifidobacterium denticolens).